The following is a 201-amino-acid chain: Twist-related protein 1 (201 aa).

Residues 1-18 show a composition bias toward low complexity; the sequence is MMQDVSSSPVSPADDSLS. Positions 1–106 are disordered; that stretch reads MMQDVSSSPV…GGGSPQSYEE (106 aa). Positions 34–43 are enriched in basic residues; the sequence is RGGRKRRSSR. Gly residues-rich tracts occupy residues 46-65 and 80-100; these read AGGG…GGDE and GCGG…GGGS. The 52-residue stretch at 109–160 folds into the bHLH domain; it reads TQRVMANVRERQRTQSLNEAFAALPKIIPTLPSDKLSKIQTLKLAARYIDFL. Residues 162 to 190 form a sufficient for transactivation activity region; the sequence is QVLQSDELDSKMASYVAHERLSYAFSVWR.

Efficient DNA binding requires dimerization with another bHLH protein. Homodimer or heterodimer with E proteins such as TCF3. ID1 binds preferentially to TCF3 but does not interact efficiently with TWIST1 so ID1 levels control the amount of TCF3 available to dimerize with TWIST and thus determine the type of dimer formed.

It localises to the nucleus. Its function is as follows. Acts as a transcriptional regulator. Inhibits myogenesis by sequestrating E proteins, inhibiting trans-activation by MEF2, and inhibiting DNA-binding by MYOD1 through physical interaction. This interaction probably involves the basic domains of both proteins. Also represses expression of pro-inflammatory cytokines such as TNFA and IL1B. Regulates cranial suture patterning and fusion. Activates transcription as a heterodimer with E proteins. Regulates gene expression differentially, depending on dimer composition. Homodimers induce expression of FGFR2 and POSTN while heterodimers repress FGFR2 and POSTN expression and induce THBS1 expression. Heterodimerization is also required for osteoblast differentiation. Represses the activity of the circadian transcriptional activator: NPAS2-BMAL1 heterodimer. The protein is Twist-related protein 1 (TWIST1) of Pan troglodytes (Chimpanzee).